Consider the following 293-residue polypeptide: Iron-sulfur cluster transfer protein Nubpl (293 aa).

Residues 214 to 217 (CQNC) form a CXXC motif probably involved in coordinating iron-sulfur cluster binding region.

The protein belongs to the Mrp/NBP35 ATP-binding proteins family. As to quaternary structure, homodimer; dimerization is not reliant on iron-sulfur cluster binding. The cofactor is [4Fe-4S] cluster.

The protein resides in the mitochondrion membrane. Its function is as follows. Iron-sulfur cluster transfer protein involved in the assembly of the mitochondrial membrane respiratory chain NADH dehydrogenase (Complex I). May deliver one or more Fe-S clusters to complex I subunits. Alleviates pausing in mitochondrial DNA (mtDNA) replication at slow zone 2. May be involved in mtDNA-helicase-mediated mtDNA unwinding and replication by transferring iron-sulfur clusters. The sequence is that of Iron-sulfur cluster transfer protein Nubpl from Drosophila melanogaster (Fruit fly).